Reading from the N-terminus, the 227-residue chain is Enolase-phosphatase E1 (227 aa).

This sequence belongs to the HAD-like hydrolase superfamily. MasA/MtnC family. Monomer. The cofactor is Mg(2+).

The enzyme catalyses 5-methylsulfanyl-2,3-dioxopentyl phosphate + H2O = 1,2-dihydroxy-5-(methylsulfanyl)pent-1-en-3-one + phosphate. It functions in the pathway amino-acid biosynthesis; L-methionine biosynthesis via salvage pathway; L-methionine from S-methyl-5-thio-alpha-D-ribose 1-phosphate: step 3/6. The protein operates within amino-acid biosynthesis; L-methionine biosynthesis via salvage pathway; L-methionine from S-methyl-5-thio-alpha-D-ribose 1-phosphate: step 4/6. In terms of biological role, bifunctional enzyme that catalyzes the enolization of 2,3-diketo-5-methylthiopentyl-1-phosphate (DK-MTP-1-P) into the intermediate 2-hydroxy-3-keto-5-methylthiopentenyl-1-phosphate (HK-MTPenyl-1-P), which is then dephosphorylated to form the acireductone 1,2-dihydroxy-3-keto-5-methylthiopentene (DHK-MTPene). In Pseudomonas savastanoi pv. phaseolicola (strain 1448A / Race 6) (Pseudomonas syringae pv. phaseolicola (strain 1448A / Race 6)), this protein is Enolase-phosphatase E1.